A 141-amino-acid chain; its full sequence is Large ribosomal subunit protein uL11 (141 aa).

This sequence belongs to the universal ribosomal protein uL11 family. Part of the ribosomal stalk of the 50S ribosomal subunit. Interacts with L10 and the large rRNA to form the base of the stalk. L10 forms an elongated spine to which L12 dimers bind in a sequential fashion forming a multimeric L10(L12)X complex. Post-translationally, one or more lysine residues are methylated.

In terms of biological role, forms part of the ribosomal stalk which helps the ribosome interact with GTP-bound translation factors. This chain is Large ribosomal subunit protein uL11, found in Clostridium botulinum (strain Kyoto / Type A2).